Here is a 338-residue protein sequence, read N- to C-terminus: MNQNVNNAITMTVLGAGSYGTSLAISLARYGANVILWGHDAEHIAQLEIDRANEAFLPGVAFPESLILSADLEMAVQASRDLLVVVPSHVFGLVLSDVKPFLREDSRICWATKGLEPETGRLLKEVAVDAVGAEVPLAVLSGPTFAKELAAGMPTAIAVSSPDDAFVEDLQEKIHCSKTFRVYSNSDFIGMQLGGAVKNVIAIGAGMSDGIGFGANARTALITRGLAEMCRLGAALGAQKETFMGMAGLGDLVLTCTDNQSRNRRFGLALGQGKSVDQAQIDIGQVVEGYRNTKEVWALAQRYGVEMPISEQIYQVLYQGKDAREAAKDLLARDKKYE.

The NADPH site is built by Ser-18, Tyr-19, His-39, and Lys-113. Lys-113, Gly-142, and Thr-144 together coordinate sn-glycerol 3-phosphate. Ala-146 lines the NADPH pocket. Sn-glycerol 3-phosphate contacts are provided by Lys-198, Asp-251, Ser-261, Arg-262, and Asn-263. Lys-198 serves as the catalytic Proton acceptor. Arg-262 is an NADPH binding site. Residues Val-286 and Glu-288 each contribute to the NADPH site.

Belongs to the NAD-dependent glycerol-3-phosphate dehydrogenase family.

The protein localises to the cytoplasm. The catalysed reaction is sn-glycerol 3-phosphate + NAD(+) = dihydroxyacetone phosphate + NADH + H(+). The enzyme catalyses sn-glycerol 3-phosphate + NADP(+) = dihydroxyacetone phosphate + NADPH + H(+). The protein operates within membrane lipid metabolism; glycerophospholipid metabolism. Catalyzes the reduction of the glycolytic intermediate dihydroxyacetone phosphate (DHAP) to sn-glycerol 3-phosphate (G3P), the key precursor for phospholipid synthesis. The protein is Glycerol-3-phosphate dehydrogenase [NAD(P)+] of Photobacterium profundum (strain SS9).